The primary structure comprises 485 residues: Zinc finger protein 165 (485 aa).

K23 is covalently cross-linked (Glycyl lysine isopeptide (Lys-Gly) (interchain with G-Cter in SUMO2)). Residues 62-127 enclose the SCAN box domain; it reads GPREALSRLR…EEAVTILEDL (66 aa). Glycyl lysine isopeptide (Lys-Gly) (interchain with G-Cter in SUMO2) cross-links involve residues K162 and K195. Residues 290 to 314 form a C2H2-type 1; degenerate zinc finger; the sequence is KSCKHGTCDQSFKWNSDFINHQIIY. 5 C2H2-type zinc fingers span residues 344 to 366, 372 to 394, 400 to 422, 428 to 450, and 456 to 478; these read HQCN…QRIH, YECN…RRIH, FGCK…QRIH, YECS…FRIH, and YECS…QRIH.

The protein belongs to the krueppel C2H2-type zinc-finger protein family. Expressed specifically in testis.

It is found in the nucleus. In terms of biological role, may be involved in transcriptional regulation. The chain is Zinc finger protein 165 (ZNF165) from Homo sapiens (Human).